The sequence spans 302 residues: FeMo cofactor biosynthesis protein NifB (302 aa).

In terms of domain architecture, Radical SAM core spans 22-264 (HDKYGRVHLP…PQFRACGQCR (243 aa)). Residues C36, C40, and C43 each coordinate [4Fe-4S] cluster. S-adenosyl-L-methionine contacts are provided by G91, T142, and I194. Positions 260 and 263 each coordinate [4Fe-4S] cluster.

The protein belongs to the radical SAM superfamily. NifB family. Monomer. Requires [4Fe-4S] cluster as cofactor.

The protein operates within cofactor biosynthesis; Fe-Mo cofactor biosynthesis. Its function is as follows. Involved in the biosynthesis of the iron-molybdenum cofactor (FeMo-co or M-cluster) found in the dinitrogenase enzyme of the nitrogenase complex in nitrogen-fixing microorganisms. NifB catalyzes the crucial step of radical SAM-dependent carbide insertion that occurs concomitant with the insertion of a 9th sulfur and the rearrangement/coupling of two [4Fe-4S] clusters into a [8Fe-9S-C] cluster, the precursor to the M-cluster. This Methanocaldococcus infernus (strain DSM 11812 / JCM 15783 / ME) protein is FeMo cofactor biosynthesis protein NifB.